The sequence spans 345 residues: Acetylserotonin O-methyltransferase (345 aa).

Residues Y147, W164, D210, 235 to 237 (GDF), and R252 contribute to the S-adenosyl-L-methionine site. The Proton donor/acceptor role is filled by H255. Substrate contacts are provided by D256, N302, and Q306.

Belongs to the class I-like SAM-binding methyltransferase superfamily. Cation-independent O-methyltransferase family. In terms of assembly, homodimer. In terms of tissue distribution, highly expressed in pineal gland. In the retina, 10- to 100-fold lower expression compared to pineal gland, if any.

The enzyme catalyses N-acetylserotonin + S-adenosyl-L-methionine = melatonin + S-adenosyl-L-homocysteine + H(+). The protein operates within aromatic compound metabolism; melatonin biosynthesis; melatonin from serotonin: step 1/2. Catalyzes the transfer of a methyl group onto N-acetylserotonin, producing melatonin (N-acetyl-5-methoxytryptamine). This chain is Acetylserotonin O-methyltransferase (ASMT), found in Macaca mulatta (Rhesus macaque).